We begin with the raw amino-acid sequence, 296 residues long: Light-independent protochlorophyllide reductase iron-sulfur ATP-binding protein (296 aa).

Residues 1-20 form a disordered region; the sequence is MTTTLSRPTDGEGSVQVQQD. ATP is bound by residues 39–44 and lysine 68; that span reads GIGKST. Residue serine 43 participates in Mg(2+) binding. 2 residues coordinate [4Fe-4S] cluster: cysteine 124 and cysteine 158. 209–210 provides a ligand contact to ATP; sequence NR.

This sequence belongs to the NifH/BchL/ChlL family. In terms of assembly, homodimer. Protochlorophyllide reductase is composed of three subunits; ChlL, ChlN and ChlB. [4Fe-4S] cluster is required as a cofactor.

It carries out the reaction chlorophyllide a + oxidized 2[4Fe-4S]-[ferredoxin] + 2 ADP + 2 phosphate = protochlorophyllide a + reduced 2[4Fe-4S]-[ferredoxin] + 2 ATP + 2 H2O. The protein operates within porphyrin-containing compound metabolism; chlorophyll biosynthesis (light-independent). In terms of biological role, component of the dark-operative protochlorophyllide reductase (DPOR) that uses Mg-ATP and reduced ferredoxin to reduce ring D of protochlorophyllide (Pchlide) to form chlorophyllide a (Chlide). This reaction is light-independent. The L component serves as a unique electron donor to the NB-component of the complex, and binds Mg-ATP. The protein is Light-independent protochlorophyllide reductase iron-sulfur ATP-binding protein of Synechococcus sp. (strain CC9902).